The primary structure comprises 302 residues: tRNA pseudouridine synthase B (302 aa).

Residue aspartate 45 is the Nucleophile of the active site.

Belongs to the pseudouridine synthase TruB family. Type 1 subfamily.

It carries out the reaction uridine(55) in tRNA = pseudouridine(55) in tRNA. Responsible for synthesis of pseudouridine from uracil-55 in the psi GC loop of transfer RNAs. The sequence is that of tRNA pseudouridine synthase B from Francisella tularensis subsp. tularensis (strain WY96-3418).